The chain runs to 865 residues: Carbohydrate-responsive element-binding protein (865 aa).

Disordered regions lie at residues 15–41 and 53–77; these read PRVV…AGGL and MVSS…LADF. A phosphoserine mark is found at S20, S23, and S25. T27 is modified (phosphothreonine). S196 is subject to Phosphoserine. Disordered stretches follow at residues 334 to 392 and 500 to 653; these read GILG…TKMP and QPRC…LSRG. The segment covering 351-368 has biased composition (polar residues); it reads GMTPLSGNTRLQARNSCS. Over residues 515-533 the composition is skewed to low complexity; that stretch reads ASPPTLTSATASPTATATA. S568 bears the Phosphoserine; by AMPK mark. Pro residues predominate over residues 583–597; sequence PPIPAPTPPRPPPGP. Phosphoserine is present on residues S615, S627, and S644. Positions 662 to 716 constitute a bHLH domain; it reads NRRITHISAEQKRRFNIKLGFDTLHGLVSTLSAQPSLKVSKATTLQKTAEYILML. Positions 716–737 are leucine-zipper; sequence LQQERAAMQEEAQQLRDEIEEL.

In terms of assembly, binds DNA as a heterodimer with TCFL4/MLX. In terms of processing, phosphorylation at Ser-568 by AMPK inactivates the DNA-binding activity.

The protein localises to the nucleus. Its function is as follows. Transcriptional repressor. Binds to the canonical and non-canonical E box sequences 5'-CACGTG-3'. The chain is Carbohydrate-responsive element-binding protein (Mlxipl) from Rattus norvegicus (Rat).